Consider the following 281-residue polypeptide: Phosphate import ATP-binding protein PstB (281 aa).

The region spanning 33–276 (FKIENLSLWY…PQLKRTRDYI (244 aa)) is the ABC transporter domain. An ATP-binding site is contributed by 67-74 (GPSGCGKS).

It belongs to the ABC transporter superfamily. Phosphate importer (TC 3.A.1.7) family. In terms of assembly, the complex is composed of two ATP-binding proteins (PstB), two transmembrane proteins (PstC and PstA) and a solute-binding protein (PstS).

The protein localises to the cell membrane. The catalysed reaction is phosphate(out) + ATP + H2O = ADP + 2 phosphate(in) + H(+). In terms of biological role, part of the ABC transporter complex PstSACB involved in phosphate import. Responsible for energy coupling to the transport system. The sequence is that of Phosphate import ATP-binding protein PstB from Mycoplasma mobile (strain ATCC 43663 / 163K / NCTC 11711) (Mesomycoplasma mobile).